A 942-amino-acid chain; its full sequence is UvrABC system protein A (942 aa).

Residue 31–38 (GLSGSGKS) participates in ATP binding. The segment at 253–280 (CSECGYSLPELEPRLFSFNNPAGACPTC) adopts a C4-type zinc-finger fold. ABC transporter domains follow at residues 310–586 (WDRR…EASI) and 606–936 (YDAN…RFLT). 639–646 (GVSGSGKS) contributes to the ATP binding site. A C4-type zinc finger spans residues 739–765 (CEACQGDGVIKVEMHFLPDVYVPCDHC).

This sequence belongs to the ABC transporter superfamily. UvrA family. In terms of assembly, forms a heterotetramer with UvrB during the search for lesions.

It is found in the cytoplasm. The UvrABC repair system catalyzes the recognition and processing of DNA lesions. UvrA is an ATPase and a DNA-binding protein. A damage recognition complex composed of 2 UvrA and 2 UvrB subunits scans DNA for abnormalities. When the presence of a lesion has been verified by UvrB, the UvrA molecules dissociate. This is UvrABC system protein A from Haemophilus ducreyi (strain 35000HP / ATCC 700724).